We begin with the raw amino-acid sequence, 827 residues long: 4-hydroxy-3-methylbut-2-enyl diphosphate reductase (827 aa).

Residues 1–284 (MEIIRAKHMG…MNIEKKVRGI (284 aa)) form a 4-hydroxy-3-methylbut-2-enyl diphosphate reductase region. Residue Cys12 coordinates [4Fe-4S] cluster. (2E)-4-hydroxy-3-methylbut-2-enyl diphosphate-binding residues include His40 and His79. The dimethylallyl diphosphate site is built by His40 and His79. His40 and His79 together coordinate isopentenyl diphosphate. Cys101 contacts [4Fe-4S] cluster. His129 provides a ligand contact to (2E)-4-hydroxy-3-methylbut-2-enyl diphosphate. His129 serves as a coordination point for dimethylallyl diphosphate. His129 contributes to the isopentenyl diphosphate binding site. Glu131 serves as the catalytic Proton donor. Thr168 is a binding site for (2E)-4-hydroxy-3-methylbut-2-enyl diphosphate. Cys196 contributes to the [4Fe-4S] cluster binding site. (2E)-4-hydroxy-3-methylbut-2-enyl diphosphate contacts are provided by Ser224, Ser225, Asn226, and Ser268. Positions 224, 225, 226, and 268 each coordinate dimethylallyl diphosphate. Isopentenyl diphosphate contacts are provided by Ser224, Ser225, Asn226, and Ser268. S1 motif domains lie at 477-545 (GQIV…LSIK), 562-632 (DDEI…LGIK), 649-716 (DTVI…GSLK), and 733-802 (GTTV…LSIK).

It in the N-terminal section; belongs to the IspH family. [4Fe-4S] cluster serves as cofactor.

The enzyme catalyses isopentenyl diphosphate + 2 oxidized [2Fe-2S]-[ferredoxin] + H2O = (2E)-4-hydroxy-3-methylbut-2-enyl diphosphate + 2 reduced [2Fe-2S]-[ferredoxin] + 2 H(+). It catalyses the reaction dimethylallyl diphosphate + 2 oxidized [2Fe-2S]-[ferredoxin] + H2O = (2E)-4-hydroxy-3-methylbut-2-enyl diphosphate + 2 reduced [2Fe-2S]-[ferredoxin] + 2 H(+). It participates in isoprenoid biosynthesis; dimethylallyl diphosphate biosynthesis; dimethylallyl diphosphate from (2E)-4-hydroxy-3-methylbutenyl diphosphate: step 1/1. The protein operates within isoprenoid biosynthesis; isopentenyl diphosphate biosynthesis via DXP pathway; isopentenyl diphosphate from 1-deoxy-D-xylulose 5-phosphate: step 6/6. Catalyzes the conversion of 1-hydroxy-2-methyl-2-(E)-butenyl 4-diphosphate (HMBPP) into a mixture of isopentenyl diphosphate (IPP) and dimethylallyl diphosphate (DMAPP). Acts in the terminal step of the DOXP/MEP pathway for isoprenoid precursor biosynthesis. The protein is 4-hydroxy-3-methylbut-2-enyl diphosphate reductase of Fusobacterium nucleatum subsp. nucleatum (strain ATCC 25586 / DSM 15643 / BCRC 10681 / CIP 101130 / JCM 8532 / KCTC 2640 / LMG 13131 / VPI 4355).